Consider the following 112-residue polypeptide: Nitrogenase-stabilizing/protective protein NifW (112 aa).

This sequence belongs to the NifW family. In terms of assembly, homotrimer; associates with NifD.

Its function is as follows. May protect the nitrogenase Fe-Mo protein from oxidative damage. The protein is Nitrogenase-stabilizing/protective protein NifW of Paraburkholderia xenovorans (strain LB400).